The primary structure comprises 340 residues: NADH-quinone oxidoreductase subunit H (340 aa).

The next 8 membrane-spanning stretches (helical) occupy residues 4 to 24 (TIGI…PLLI), 78 to 98 (YLFV…WAVI), 113 to 133 (VLYL…AGWA), 151 to 171 (VSYE…AGSM), 184 to 204 (MLHW…ISGI), 244 to 264 (SMIL…LSPF), 273 to 293 (IFFI…FLFV), and 316 to 336 (VLIP…VAHV).

It belongs to the complex I subunit 1 family. NDH-1 is composed of 14 different subunits. Subunits NuoA, H, J, K, L, M, N constitute the membrane sector of the complex.

The protein localises to the cell inner membrane. The enzyme catalyses a quinone + NADH + 5 H(+)(in) = a quinol + NAD(+) + 4 H(+)(out). NDH-1 shuttles electrons from NADH, via FMN and iron-sulfur (Fe-S) centers, to quinones in the respiratory chain. The immediate electron acceptor for the enzyme in this species is believed to be ubiquinone. Couples the redox reaction to proton translocation (for every two electrons transferred, four hydrogen ions are translocated across the cytoplasmic membrane), and thus conserves the redox energy in a proton gradient. This subunit may bind ubiquinone. In Legionella pneumophila subsp. pneumophila (strain Philadelphia 1 / ATCC 33152 / DSM 7513), this protein is NADH-quinone oxidoreductase subunit H.